A 532-amino-acid chain; its full sequence is Undecaprenyl-phosphate glucose phosphotransferase (532 aa).

5 consecutive transmembrane segments (helical) span residues 81–101, 110–130, 155–175, 183–203, and 344–364; these read QVVV…CIAW, ELSG…FLFP, VAFG…PFGV, WLTF…YILH, and TASV…ALAI.

It belongs to the bacterial sugar transferase family.

The protein resides in the membrane. The enzyme catalyses di-trans,octa-cis-undecaprenyl phosphate + UDP-alpha-D-glucose = alpha-D-glucosyl di-trans,octa-cis-undecaprenyl diphosphate + UMP. In terms of biological role, involved in the biosynthesis of the exopolysaccharide acetan, a water-soluble polysaccharide involved in production of bacterial cellulose (BC). The sequence is that of Undecaprenyl-phosphate glucose phosphotransferase (aceA) from Komagataeibacter xylinus (Gluconacetobacter xylinus).